The primary structure comprises 497 residues: ATP synthase subunit alpha, chloroplastic (497 aa).

170–177 (GDRQTGKT) is an ATP binding site.

The protein belongs to the ATPase alpha/beta chains family. In terms of assembly, F-type ATPases have 2 components, CF(1) - the catalytic core - and CF(0) - the membrane proton channel. CF(1) has five subunits: alpha(3), beta(3), gamma(1), delta(1), epsilon(1). CF(0) has four main subunits: a, b, b' and c.

Its subcellular location is the plastid. The protein resides in the chloroplast thylakoid membrane. It carries out the reaction ATP + H2O + 4 H(+)(in) = ADP + phosphate + 5 H(+)(out). Produces ATP from ADP in the presence of a proton gradient across the membrane. The alpha chain is a regulatory subunit. This Bigelowiella natans (Pedinomonas minutissima) protein is ATP synthase subunit alpha, chloroplastic.